Consider the following 86-residue polypeptide: Omega-theraphotoxin-Hhn1e (86 aa).

A signal peptide spans M1–A21. The propeptide occupies S22 to R50. Disulfide bonds link C52–C66 and C65–C78.

It belongs to the neurotoxin 10 (Hwtx-1) family. 17 (Hntx-9) subfamily. As to expression, expressed by the venom gland.

It localises to the secreted. In terms of biological role, ion channel inhibitor. This Cyriopagopus hainanus (Chinese bird spider) protein is Omega-theraphotoxin-Hhn1e.